The sequence spans 320 residues: Ciliary microtubule inner protein 2A (320 aa).

Belongs to the CIMIP2 family. As to quaternary structure, microtubule inner protein component of sperm flagellar doublet microtubules. Expressed in sperm.

The protein resides in the cytoplasm. The protein localises to the cytoskeleton. Its subcellular location is the flagellum axoneme. Functionally, microtubule inner protein (MIP) part of the dynein-decorated doublet microtubules (DMTs) in flagellum axoneme. Binds to the intra-tubulin interfaces. This is Ciliary microtubule inner protein 2A (CIMIP2A) from Bos taurus (Bovine).